Consider the following 136-residue polypeptide: Large ribosomal subunit protein bL21 (136 aa).

Belongs to the bacterial ribosomal protein bL21 family. In terms of assembly, part of the 50S ribosomal subunit. Contacts protein L20.

Functionally, this protein binds to 23S rRNA in the presence of protein L20. The sequence is that of Large ribosomal subunit protein bL21 from Trichodesmium erythraeum (strain IMS101).